Consider the following 660-residue polypeptide: U-box domain-containing protein 13 (660 aa).

Positions 227–252 (DDNGEEQKVGVNSRSNGQTSTAASQK) are disordered. Residues 236–250 (GVNSRSNGQTSTAAS) show a composition bias toward polar residues. A U-box domain is found at 255-329 (VIPDDFRCPI…AQWCEANDIE (75 aa)). ARM repeat units follow at residues 384–423 (ADNR…NLSI), 425–464 (ENNK…SLSV), 466–505 (DENK…NLCI), 507–546 (QGNK…ILSS), and 548–587 (PEGK…HLCS). The interval 631–660 (AEQQKETAVSQPEEEAEPTHPESTTEAADT) is disordered. Residues 651-660 (PESTTEAADT) show a composition bias toward polar residues.

As to quaternary structure, binds to SD11, SD16, SD17, SD18, SD113, SD129 and SD25. In terms of processing, phosphorylated by SD1-6 and SD1-7.

The protein localises to the nucleus. The protein resides in the cytoplasm. It carries out the reaction S-ubiquitinyl-[E2 ubiquitin-conjugating enzyme]-L-cysteine + [acceptor protein]-L-lysine = [E2 ubiquitin-conjugating enzyme]-L-cysteine + N(6)-ubiquitinyl-[acceptor protein]-L-lysine.. Its pathway is protein modification; protein ubiquitination. In terms of biological role, functions as an E3 ubiquitin ligase. In Arabidopsis thaliana (Mouse-ear cress), this protein is U-box domain-containing protein 13 (PUB13).